A 381-amino-acid chain; its full sequence is Beta-1,4-galactosyltransferase 5 (381 aa).

At 1-11 the chain is on the cytoplasmic side; it reads MPTHLRFRRRS. The chain crosses the membrane as a helical; Signal-anchor for type II membrane protein span at residues 12-32; it reads FLGLLFLFSLSTSALYFIYSA. The Lumenal segment spans residues 33–381; the sequence is PGIVNEYLFM…SRDLAPVADY (349 aa). N73, N82, and N120 each carry an N-linked (GlcNAc...) asparagine glycan. An intrachain disulfide couples C106 to C151. UDP-alpha-D-galactose contacts are provided by residues 162–166, 201–203, 228–229, Y257, and W289; these read PFRNR, FNR, and VD. C222 and C241 are joined by a disulfide. Residue D229 participates in Mn(2+) binding. 291–294 is a binding site for N-acetyl-D-glucosamine; that stretch reads GEDD. H322 lines the Mn(2+) pocket. 322 to 323 lines the UDP-alpha-D-galactose pocket; the sequence is HH. Position 333 (R333) interacts with N-acetyl-D-glucosamine. The N-linked (GlcNAc...) asparagine glycan is linked to N366.

It belongs to the glycosyltransferase 7 family. Mn(2+) is required as a cofactor.

It is found in the golgi apparatus. The protein resides in the golgi stack membrane. It carries out the reaction a beta-D-glucosyl-(1&lt;-&gt;1')-N-acylsphing-4-enine + UDP-alpha-D-galactose = a beta-D-Gal-(1-&gt;4)-beta-D-Glc-(1&lt;-&gt;1)-Cer(d18:1(4E)) + UDP + H(+). It participates in protein modification; protein glycosylation. It functions in the pathway sphingolipid metabolism. Its function is as follows. Catalyzes the synthesis of lactosylceramide (LacCer) via the transfer of galactose from UDP-galactose to glucosylceramide (GlcCer). Required for proper patterning of the dorsoventral axis during embryogenesis through the regulation of BMP signaling. Plays a role in proteoglycan glycosylation that is required for BMP-dependent specification of the dorsoventral axis. In Danio rerio (Zebrafish), this protein is Beta-1,4-galactosyltransferase 5 (b4galt5).